The sequence spans 231 residues: Modulator of macroautophagy TMEM150B-B (231 aa).

Position 1 (M1) is a topological domain, cytoplasmic. Residues 2–22 (WAWALLPICLTVWATGGIWIV) form a helical membrane-spanning segment. Over 23-50 (YAMSVSNGSVNLSDGFPYISVSGTYPPQ) the chain is Extracellular. N29 and N33 each carry an N-linked (GlcNAc...) asparagine glycan. A helical transmembrane segment spans residues 51 to 71 (SCVFGQVLNVGAMLAVWISVI). Over 72–83 (RFQQIRDYNCHS) the chain is Cytoplasmic. The helical transmembrane segment at 84–104 (VLNSVSLATGILCALGTSIVG) threads the bilayer. Topologically, residues 105-115 (NFQQSNQLQTH) are extracellular. A helical membrane pass occupies residues 116–136 (LAGAFLAFIIGNVYFWMQTAL). The Cytoplasmic segment spans residues 137 to 150 (TYMVKPKHGGCYIG). A helical membrane pass occupies residues 151–171 (PIRFCLSIACTALIVAMAVFL). Residues 172–183 (KMNMKSVSAICE) lie on the Extracellular side of the membrane. Residues 184 to 204 (WIVAMILFLLYGLFAVDFWHL) traverse the membrane as a helical segment. At 205 to 231 (DGHFFHVKKRRTVIPNEMEVSTVTLSI) the chain is on the cytoplasmic side.

It belongs to the DRAM/TMEM150 family.

The protein localises to the cell membrane. The protein resides in the endosome membrane. It is found in the cytoplasmic vesicle. It localises to the autophagosome membrane. In terms of biological role, modulator of macroautophagy that causes accumulation of autophagosomes under basal conditions and enhances autophagic flux. Represses cell death and promotes long-term clonogenic survival of cells grown in the absence of glucose in a macroautophagy-independent manner. May have some role in extracellular matrix engulfment or growth factor receptor recycling, both of which can modulate cell survival. The sequence is that of Modulator of macroautophagy TMEM150B-B from Xenopus laevis (African clawed frog).